Reading from the N-terminus, the 213-residue chain is Peroxynitrite isomerase 2 (213 aa).

The GXWXGXG signature appears at 58 to 64 (GVWRGEG). Residues lysine 176 and histidine 203 each contribute to the heme b site.

Belongs to the nitrobindin family. As to quaternary structure, homodimer. Heme b serves as cofactor.

The enzyme catalyses peroxynitrite = nitrate. Its pathway is nitrogen metabolism. In terms of biological role, heme-binding protein able to scavenge peroxynitrite and to protect free L-tyrosine against peroxynitrite-mediated nitration, by acting as a peroxynitrite isomerase that converts peroxynitrite to nitrate. Therefore, this protein likely plays a role in peroxynitrite sensing and in the detoxification of reactive nitrogen and oxygen species (RNS and ROS, respectively). Is able to bind nitric oxide (NO) in vitro, but may act as a sensor of peroxynitrite levels in vivo. The sequence is that of Peroxynitrite isomerase 2 from Rhodococcus jostii (strain RHA1).